The sequence spans 61 residues: Bowman-Birk type proteinase inhibitor (61 aa).

Disulfide bonds link C4/C57, C5/C20, C8/C53, C10/C18, C27/C34, C31/C46, and C36/C44.

The protein belongs to the Bowman-Birk serine protease inhibitor family.

Its function is as follows. Strong inhibitor of trypsin with a 1:1 stoichiometry. Weaker inhibitor of chymotrypsin. The sequence is that of Bowman-Birk type proteinase inhibitor from Erythrina variegata (Indian coral tree).